A 480-amino-acid chain; its full sequence is ATP synthase subunit beta 1 (480 aa).

Residue 154-161 participates in ATP binding; it reads GGAGVGKT.

It belongs to the ATPase alpha/beta chains family. In terms of assembly, F-type ATPases have 2 components, CF(1) - the catalytic core - and CF(0) - the membrane proton channel. CF(1) has five subunits: alpha(3), beta(3), gamma(1), delta(1), epsilon(1). CF(0) has four main subunits: a(1), b(1), b'(1) and c(9-12).

The protein resides in the cell inner membrane. It carries out the reaction ATP + H2O + 4 H(+)(in) = ADP + phosphate + 5 H(+)(out). Its function is as follows. Produces ATP from ADP in the presence of a proton gradient across the membrane. The catalytic sites are hosted primarily by the beta subunits. This chain is ATP synthase subunit beta 1, found in Chlorobaculum tepidum (strain ATCC 49652 / DSM 12025 / NBRC 103806 / TLS) (Chlorobium tepidum).